Consider the following 20-residue polypeptide: ZPIDLMGKVFVFDKELSPBI.

The region spanning 1–20 is the Pentraxin (PTX) domain; it reads ZPIDLMGKVFVFDKELSPBI.

The protein belongs to the pentraxin family. As to quaternary structure, homopentamer. Pentraxin (or pentaxin) have a discoid arrangement of 5 non-covalently bound subunits.

It localises to the secreted. In Pleuronectes platessa (European plaice), this protein is Serum amyloid P-component.